Reading from the N-terminus, the 121-residue chain is Large ribosomal subunit protein bL19 (121 aa).

It belongs to the bacterial ribosomal protein bL19 family.

In terms of biological role, this protein is located at the 30S-50S ribosomal subunit interface and may play a role in the structure and function of the aminoacyl-tRNA binding site. The protein is Large ribosomal subunit protein bL19 of Neisseria meningitidis serogroup C (strain 053442).